A 607-amino-acid polypeptide reads, in one-letter code: UvrABC system protein C (607 aa).

The GIY-YIG domain occupies 19 to 97; the sequence is TLSGVYQMRD…IKQYQPKFNI (79 aa). Residues 205–240 form the UVR domain; sequence EHLLQTLTEHMLQASAAQQYERAAIVRDQISELRTI.

It belongs to the UvrC family. As to quaternary structure, interacts with UvrB in an incision complex.

The protein resides in the cytoplasm. Its function is as follows. The UvrABC repair system catalyzes the recognition and processing of DNA lesions. UvrC both incises the 5' and 3' sides of the lesion. The N-terminal half is responsible for the 3' incision and the C-terminal half is responsible for the 5' incision. This is UvrABC system protein C from Dichelobacter nodosus (strain VCS1703A).